The chain runs to 475 residues: Aspartyl/glutamyl-tRNA(Asn/Gln) amidotransferase subunit B (475 aa).

This sequence belongs to the GatB/GatE family. GatB subfamily. In terms of assembly, heterotrimer of A, B and C subunits.

The catalysed reaction is L-glutamyl-tRNA(Gln) + L-glutamine + ATP + H2O = L-glutaminyl-tRNA(Gln) + L-glutamate + ADP + phosphate + H(+). The enzyme catalyses L-aspartyl-tRNA(Asn) + L-glutamine + ATP + H2O = L-asparaginyl-tRNA(Asn) + L-glutamate + ADP + phosphate + 2 H(+). Functionally, allows the formation of correctly charged Asn-tRNA(Asn) or Gln-tRNA(Gln) through the transamidation of misacylated Asp-tRNA(Asn) or Glu-tRNA(Gln) in organisms which lack either or both of asparaginyl-tRNA or glutaminyl-tRNA synthetases. The reaction takes place in the presence of glutamine and ATP through an activated phospho-Asp-tRNA(Asn) or phospho-Glu-tRNA(Gln). This chain is Aspartyl/glutamyl-tRNA(Asn/Gln) amidotransferase subunit B, found in Bacillus mycoides (strain KBAB4) (Bacillus weihenstephanensis).